The following is a 476-amino-acid chain: Glycogen synthase (476 aa).

Residue Lys-15 coordinates ADP-alpha-D-glucose.

The protein belongs to the glycosyltransferase 1 family. Bacterial/plant glycogen synthase subfamily.

It catalyses the reaction [(1-&gt;4)-alpha-D-glucosyl](n) + ADP-alpha-D-glucose = [(1-&gt;4)-alpha-D-glucosyl](n+1) + ADP + H(+). Its pathway is glycan biosynthesis; glycogen biosynthesis. In terms of biological role, synthesizes alpha-1,4-glucan chains using ADP-glucose. The polypeptide is Glycogen synthase (Streptococcus agalactiae serotype Ia (strain ATCC 27591 / A909 / CDC SS700)).